Here is a 120-residue protein sequence, read N- to C-terminus: Natriuretic peptide (120 aa).

The first 25 residues, 1 to 25 (MVGLSRLADGGLLLVLALLPLALDG), serve as a signal peptide directing secretion. Positions 26–70 (KPAPLEKAPMAPARIIPYLRPVGKESRAALDRMVPPEDGDSRRLE) are excised as a propeptide. Residues Cys-81 and Cys-97 are joined by a disulfide bond. The propeptide occupies 110–120 (ILPYLRPIRKE).

It belongs to the natriuretic peptide family. Expressed by the venom gland.

The protein resides in the secreted. Natriuretic peptide that dose-dependently induces the rapid relaxation of rat aortic strips phenylephrine-precontracted. Acts by stimulating cGMP production in a dose-dependent manner (by probably activating NPR1 and/or NPR2). May also show potent hypotensive effects. The polypeptide is Natriuretic peptide (Micrurus altirostris (Uruguayan coral snake)).